The sequence spans 128 residues: Probable 4-amino-4-deoxy-L-arabinose-phosphoundecaprenol flippase subunit ArnF (128 aa).

Residues 1 to 2 (MG) are Cytoplasmic-facing. Residues 3-23 (LIWGLFSVIIASVAQLSLGFA) form a helical membrane-spanning segment. Residues 24 to 35 (ASHLPPMTHLWD) are Periplasmic-facing. The helical transmembrane segment at 36-56 (FIAALLAFGLDARILLLGLLG) threads the bilayer. At 57 to 76 (YLLSVFCWYKTLHKLALSKA) the chain is on the cytoplasmic side. A helical membrane pass occupies residues 77-97 (YALLSMSYVLVWIASMVLPGW). The Periplasmic segment spans residues 98–100 (EGT). Residues 101-121 (FSLKALLGVACIMSGLMLIFL) form a helical membrane-spanning segment. The Cytoplasmic segment spans residues 122–128 (PMTKQRY).

Belongs to the ArnF family. As to quaternary structure, heterodimer of ArnE and ArnF.

Its subcellular location is the cell inner membrane. The protein operates within bacterial outer membrane biogenesis; lipopolysaccharide biosynthesis. In terms of biological role, translocates 4-amino-4-deoxy-L-arabinose-phosphoundecaprenol (alpha-L-Ara4N-phosphoundecaprenol) from the cytoplasmic to the periplasmic side of the inner membrane. The polypeptide is Probable 4-amino-4-deoxy-L-arabinose-phosphoundecaprenol flippase subunit ArnF (Escherichia coli O9:H4 (strain HS)).